The chain runs to 284 residues: ELMO domain-containing protein B (284 aa).

Residues E124–S276 enclose the ELMO domain.

The protein is ELMO domain-containing protein B (elmoB) of Dictyostelium discoideum (Social amoeba).